Here is a 245-residue protein sequence, read N- to C-terminus: DnaJ homolog subfamily B member 6-B (245 aa).

Positions 3 to 69 constitute a J domain; that stretch reads EYYDVLGVQR…KKRDIYDKYG (67 aa).

As to quaternary structure, homooligomer.

The protein resides in the cytoplasm. The protein localises to the perinuclear region. It localises to the nucleus. Functionally, has a stimulatory effect on the ATPase activity of HSP70 in a dose-dependent and time-dependent manner and hence acts as a co-chaperone of HSP70. Plays an indispensable role in the organization of KRT8/KRT18 filaments. Acts as an endogenous molecular chaperone for neuronal proteins including huntingtin. Suppresses aggregation and toxicity of polyglutamine-containing, aggregation-prone proteins. Also reduces cellular toxicity and caspase-3 activity. This is DnaJ homolog subfamily B member 6-B (dnajb6-b) from Xenopus laevis (African clawed frog).